A 249-amino-acid chain; its full sequence is tRNA (guanine-N(1)-)-methyltransferase (249 aa).

S-adenosyl-L-methionine is bound by residues G112 and L132 to L137.

It belongs to the RNA methyltransferase TrmD family. As to quaternary structure, homodimer.

It localises to the cytoplasm. The catalysed reaction is guanosine(37) in tRNA + S-adenosyl-L-methionine = N(1)-methylguanosine(37) in tRNA + S-adenosyl-L-homocysteine + H(+). In terms of biological role, specifically methylates guanosine-37 in various tRNAs. The chain is tRNA (guanine-N(1)-)-methyltransferase from Geobacter sp. (strain M21).